The primary structure comprises 411 residues: Adherens junction-associated protein 1 (411 aa).

Positions 1 to 43 (MWIQQLLGLSSMPIRWPGRSLGSHLWILIAMLQLAVDFPSCDS) are cleaved as a signal peptide. Residues 44–283 (LGPGPEFRLL…GETSGLAVHQ (240 aa)) are Extracellular-facing. 3 stretches are compositionally biased toward low complexity: residues 62 to 76 (LWSLRTGPPTRLPTP), 121 to 145 (PPAATRSSPSLTSASASSSMTAGAA), and 247 to 264 (TPVGVSTTEPSTSPSNNG). Disordered regions lie at residues 62 to 156 (LWSL…RGRR) and 242 to 270 (DPWKRTPVGVSTTEPSTSPSNNGKDIQPP). Residues 284–304 (IITITVSLIMVIAALITTLVL) traverse the membrane as a helical segment. Residues 304–411 (LKNCCAPSGH…VSEKWFEISC (108 aa)) are targeting signals. Residues 305–411 (KNCCAPSGHT…VSEKWFEISC (107 aa)) lie on the Cytoplasmic side of the membrane.

In terms of assembly, forms a complex with CDH1 and CTNNB1; interacts directly with CTNNB1. Interacts with AP1M2 and with isoform 2 of BSG/CD147.

The protein localises to the basolateral cell membrane. It is found in the apical cell membrane. Its subcellular location is the cell junction. The protein resides in the adherens junction. In terms of biological role, plays a role in cell adhesion and cell migration. This chain is Adherens junction-associated protein 1 (Ajap1), found in Rattus norvegicus (Rat).